The sequence spans 453 residues: Gastrin/cholecystokinin type B receptor (453 aa).

Over 1–57 (MELLKLNRSAQGSGAGPGASLCRAGGALLNSSGAGNLSCEPPRLRGAGTRELELAIR) the chain is Extracellular. 3 N-linked (GlcNAc...) asparagine glycosylation sites follow: asparagine 7, asparagine 30, and asparagine 36. A helical membrane pass occupies residues 58 to 79 (VTLYAVIFLMSVGGNVLIIVVL). At 80–87 (GLSRRLRT) the chain is on the cytoplasmic side. The helical transmembrane segment at 88–109 (VTNAFLLSLAVSDLLLAVACMP) threads the bilayer. Over 110 to 131 (FTLLPNLMGTFIFGTVVCKAVS) the chain is Extracellular. Residues cysteine 127 and cysteine 206 are joined by a disulfide bond. The helical transmembrane segment at 132-150 (YLMGVSVSVSTLSLVAIAL) threads the bilayer. The Cytoplasmic portion of the chain corresponds to 151–170 (ERYSAICRPLQARVWQTRSH). Residues 171-189 (AARVIIATWMLSGLLMVPY) traverse the membrane as a helical segment. The Extracellular portion of the chain corresponds to 190 to 220 (PVYTAVQPAGGARALQCVHRWPSARVRQTWS). A helical transmembrane segment spans residues 221-243 (VLLLLLLFFVPGVVMAVAYGLIS). At 244-339 (RELYLGLRFD…KLLAKKRVVR (96 aa)) the chain is on the cytoplasmic side. The disordered stretch occupies residues 258 to 286 (SESRVRSQGGLRGGAGPGPAPPNGSCRPE). The helical transmembrane segment at 340–361 (MLLVIVVLFFLCWLPLYSANTW) threads the bilayer. At 362–379 (RAFDSSGAHRALSGAPIS) the chain is on the extracellular side. Residues 380–400 (FIHLLSYASACVNPLVYCFMH) form a helical membrane-spanning segment. Topologically, residues 401–453 (RRFRQACLETCARCCPRPPRARPRPLPDEDPPTPSIASLSRLSYTTISTLGPG) are cytoplasmic. Cysteine 414 is lipidated: S-palmitoyl cysteine. The interval 422–453 (RPRPLPDEDPPTPSIASLSRLSYTTISTLGPG) is disordered. Positions 435–453 (SIASLSRLSYTTISTLGPG) are enriched in polar residues.

This sequence belongs to the G-protein coupled receptor 1 family. As to expression, parietal cells, pancreas, brain and various neoplastic tissues.

The protein localises to the cell membrane. Receptor for gastrin and cholecystokinin. The CCK-B receptors occur throughout the central nervous system where they modulate anxiety, analgesia, arousal, and neuroleptic activity. This receptor mediates its action by association with G proteins that activate a phosphatidylinositol-calcium second messenger system. This Canis lupus familiaris (Dog) protein is Gastrin/cholecystokinin type B receptor (CCKBR).